A 672-amino-acid chain; its full sequence is Leucine-rich repeat receptor-like protein kinase PXC1 (672 aa).

An N-terminal signal peptide occupies residues 1 to 21; the sequence is MAAKPLLLPLLLLLHLSITLA. Over 22 to 269 the chain is Extracellular; it reads QNDTNALTLF…IHSHRGIKPG (248 aa). Residues Asn23, Asn44, and Asn101 are each glycosylated (N-linked (GlcNAc...) asparagine). One copy of the LRR 1 repeat lies at 87–110; sequence LDQLRLLDLHDNRLNGTVSPLTNC. A Glycyl lysine isopeptide (Lys-Gly) (interchain with G-Cter in ubiquitin) cross-link involves residue Lys111. LRR repeat units lie at residues 112–134, 135–158, 160–181, and 182–205; these read NLRL…ISFL, KRMI…ILGF, RVLT…FSQM, and KSLL…VVKK. N-linked (GlcNAc...) asparagine glycosylation is found at Asn188 and Asn197. Polar residues predominate over residues 233–249; the sequence is ESSNTDQIVPSNPTSIP. Positions 233 to 254 are disordered; it reads ESSNTDQIVPSNPTSIPHSPVS. The chain crosses the membrane as a helical span at residues 270–290; that stretch reads IIAAVIGGCVAVIVLVSFGFA. Over 291 to 672 the chain is Cytoplasmic; that stretch reads FCCGRLDRNG…MSPSLATTDG (382 aa). Residues 300-333 form a disordered region; it reads GERSKSGSVETGFVGGGEGKRRSSYGEGGESDAT. The Protein kinase domain occupies 357–645; the sequence is KASAEMLGKG…AEVVKMVEEI (289 aa). Residues 363–371 and Lys386 each bind ATP; that span reads LGKGSLGTV. The disordered stretch occupies residues 650–672; that stretch reads SPVGEDFDESRNSMSPSLATTDG. Residues 661–672 show a composition bias toward polar residues; that stretch reads NSMSPSLATTDG.

This sequence belongs to the protein kinase superfamily. Ser/Thr protein kinase family. In terms of tissue distribution, expressed in the vascular strands of cotyledons, the shoot apex, hypocotyls, roots, leaves, stems and flowers.

Its subcellular location is the cell membrane. In terms of biological role, leucine-rich repeat receptor-like protein kinase involved in secondary cell wall formation in xylem fibers. May play a role in a regulatory network which also incorporates the TDR/PXY signaling pathway and regulates the maturation of interfascicular fiber cells. May promote the initiation of secondary cell wall deposition during the procedure of cell expansion. In Arabidopsis thaliana (Mouse-ear cress), this protein is Leucine-rich repeat receptor-like protein kinase PXC1.